The primary structure comprises 327 residues: MTATKQHKKVILVGDGAVGSSYAFALVTQNIAQELGIIDIFKEKTQGDAEDLSHALAFTSPKKIYAADYADCHDADLVVLTAGAPQKPGETRLDLVEKNLRINKEVVTQIVASGFKGIFLVAANPVDILTYSTWKFSGFPKERVIGSGTSLDSARFRQALAAKIGVDARSVHAYIMGEHGDSEFAVWSHANVAGVGLYDWLQANRDVDEQGLVDLFISVRDAAYSIINKKGATFYGIAVALARITKAILDDENAVLPLSVFQEGQYEGVEDCYIGQPAIVGAYGIVRPVNIPLNDAELQKMQASANQLKAIIDEAFSKEEFASAAKN.

NAD(+) is bound by residues V18, D39, K44, Y69, and 83 to 84 (GA). Residues Q86, R92, and 124–127 (NPVD) contribute to the substrate site. NAD(+)-binding positions include 122–124 (AAN) and S147. Position 152–155 (152–155 (DSAR)) interacts with substrate. R157 and H172 together coordinate beta-D-fructose 1,6-bisphosphate. The Proton acceptor role is filled by H179. Y224 bears the Phosphotyrosine mark. Residue T233 participates in substrate binding.

This sequence belongs to the LDH/MDH superfamily. LDH family. As to quaternary structure, homotetramer.

The protein localises to the cytoplasm. It catalyses the reaction (S)-lactate + NAD(+) = pyruvate + NADH + H(+). The protein operates within fermentation; pyruvate fermentation to lactate; (S)-lactate from pyruvate: step 1/1. Allosterically activated by fructose 1,6-bisphosphate (FBP). In terms of biological role, catalyzes the conversion of lactate to pyruvate. The protein is L-lactate dehydrogenase of Streptococcus equi subsp. zooepidemicus (strain H70).